The primary structure comprises 655 residues: Tumor necrosis factor receptor superfamily member 21 (655 aa).

Positions 1 to 41 are cleaved as a signal peptide; it reads MGTSASSITALASCSRIAGQVGATMVAGSLLLLGFLSTITA. Residues 42–349 lie on the Extracellular side of the membrane; the sequence is QPEQKTLSLT…PHKHFDINEH (308 aa). TNFR-Cys repeat units follow at residues 50 to 88, 90 to 131, 133 to 167, and 170 to 211; these read LTGT…LRVC, SCPS…DREC, CPPG…EDVR, and QCAR…DNVC. 9 cysteine pairs are disulfide-bonded: Cys67-Cys80, Cys70-Cys88, Cys91-Cys106, Cys109-Cys123, Cys113-Cys131, Cys133-Cys144, Cys150-Cys168, Cys171-Cys186, and Cys192-Cys211. An N-linked (GlcNAc...) asparagine glycan is attached at Asn82. Disordered stretches follow at residues 214–306 and 318–338; these read HLSS…GPHH and EATG…HPRQ. A compositionally biased stretch (low complexity) spans 216-225; the sequence is SSSSTTPSSP. 2 stretches are compositionally biased toward polar residues: residues 241–262 and 276–302; these read VPSS…TASV and PDNT…THQQ. Residues Asn252, Asn278, and Asn289 are each glycosylated (N-linked (GlcNAc...) asparagine). A helical membrane pass occupies residues 350–370; the sequence is LPWMIVLFLLLVLVLIVVCSI. Cys368 carries S-palmitoyl cysteine lipidation. Residues 371 to 655 are Cytoplasmic-facing; it reads RKSSRTLKKG…SVYSHLPDLL (285 aa). The Death domain occupies 415 to 498; that stretch reads GIDILKLVAA…DVVEKIRGLM (84 aa).

Associates with TRADD. Interacts with NGFR. Interacts with CASP8. Oxidized in response to reactive oxygen species (ROS), leading to endocytosis. As to expression, detected in brain (at protein level). Detected in corpus callosum oligodendrocytes. Detected in embryonic and adult brain.

It is found in the cell membrane. Promotes apoptosis, possibly via a pathway that involves the activation of NF-kappa-B. Can also promote apoptosis mediated by BAX and by the release of cytochrome c from the mitochondria into the cytoplasm. Trophic-factor deprivation triggers the cleavage of surface APP by beta-secretase to release sAPP-beta which is further cleaved to release an N-terminal fragment of APP (N-APP). Negatively regulates oligodendrocyte survival, maturation and myelination. Plays a role in signaling cascades triggered by stimulation of T-cell receptors, in the adaptive immune response and in the regulation of T-cell differentiation and proliferation. Negatively regulates T-cell responses and the release of cytokines such as IL4, IL5, IL10, IL13 and IFNG by Th2 cells. Negatively regulates the production of IgG, IgM and IgM in response to antigens. May inhibit the activation of JNK in response to T-cell stimulation. Also acts as a regulator of pyroptosis: recruits CASP8 in response to reactive oxygen species (ROS) and subsequent oxidation, leading to activation of GSDMC. The sequence is that of Tumor necrosis factor receptor superfamily member 21 (Tnfrsf21) from Rattus norvegicus (Rat).